We begin with the raw amino-acid sequence, 361 residues long: Phospho-N-acetylmuramoyl-pentapeptide-transferase (361 aa).

10 consecutive transmembrane segments (helical) span residues threonine 25–asparagine 45, threonine 72–alanine 92, valine 95–tyrosine 115, threonine 133–glycine 153, valine 169–glycine 189, glycine 200–alanine 220, leucine 240–proline 260, isoleucine 264–alanine 284, isoleucine 289–valine 309, and glutamine 338–leucine 358.

Belongs to the glycosyltransferase 4 family. MraY subfamily. The cofactor is Mg(2+).

Its subcellular location is the cell inner membrane. The enzyme catalyses UDP-N-acetyl-alpha-D-muramoyl-L-alanyl-gamma-D-glutamyl-meso-2,6-diaminopimeloyl-D-alanyl-D-alanine + di-trans,octa-cis-undecaprenyl phosphate = di-trans,octa-cis-undecaprenyl diphospho-N-acetyl-alpha-D-muramoyl-L-alanyl-D-glutamyl-meso-2,6-diaminopimeloyl-D-alanyl-D-alanine + UMP. It participates in cell wall biogenesis; peptidoglycan biosynthesis. Functionally, catalyzes the initial step of the lipid cycle reactions in the biosynthesis of the cell wall peptidoglycan: transfers peptidoglycan precursor phospho-MurNAc-pentapeptide from UDP-MurNAc-pentapeptide onto the lipid carrier undecaprenyl phosphate, yielding undecaprenyl-pyrophosphoryl-MurNAc-pentapeptide, known as lipid I. This is Phospho-N-acetylmuramoyl-pentapeptide-transferase from Rhodopseudomonas palustris (strain BisB5).